The primary structure comprises 406 residues: Flavohemoprotein (406 aa).

Positions 6-144 (VLLDKKTTEI…IADIFISVEK (139 aa)) constitute a Globin domain. Heme b is bound at residue H91. Catalysis depends on charge relay system residues Y101 and E143. Positions 155–406 (GGWTGFRDFK…LFGPLEPIAK (252 aa)) are reductase. The FAD-binding FR-type domain occupies 158–267 (TGFRDFKVIK…SAPAGDFILD (110 aa)). Residues Y196 and 212–215 (RQYS) contribute to the FAD site. Residue 280-285 (GVGLTP) coordinates NADP(+). An FAD-binding site is contributed by 397–400 (LFGP).

It belongs to the globin family. Two-domain flavohemoproteins subfamily. This sequence in the C-terminal section; belongs to the flavoprotein pyridine nucleotide cytochrome reductase family. It depends on heme b as a cofactor. The cofactor is FAD.

It catalyses the reaction 2 nitric oxide + NADPH + 2 O2 = 2 nitrate + NADP(+) + H(+). It carries out the reaction 2 nitric oxide + NADH + 2 O2 = 2 nitrate + NAD(+) + H(+). Its function is as follows. Is involved in NO detoxification in an aerobic process, termed nitric oxide dioxygenase (NOD) reaction that utilizes O(2) and NAD(P)H to convert NO to nitrate, which protects the bacterium from various noxious nitrogen compounds. Therefore, plays a central role in the inducible response to nitrosative stress. This Oceanobacillus iheyensis (strain DSM 14371 / CIP 107618 / JCM 11309 / KCTC 3954 / HTE831) protein is Flavohemoprotein.